A 689-amino-acid chain; its full sequence is Putative pentatricopeptide repeat-containing protein At3g15130 (689 aa).

PPR repeat units lie at residues Gln-5 to Leu-39, Asn-40 to Arg-70, Asn-71 to Pro-105, Asn-106 to Met-140, Met-141 to Arg-171, Ser-172 to Glu-206, Asp-209 to Cys-243, Ser-246 to Lys-276, Thr-277 to Ile-311, Asp-312 to Leu-342, Glu-347 to Lys-377, Asp-378 to Pro-412, Asp-413 to Pro-448, and Arg-449 to Lys-479. Residues Ile-484–Glu-559 form a type E motif region. The interval Arg-560–Arg-590 is type E(+) motif. The segment at Glu-592–Trp-689 is type DYW motif.

The protein belongs to the PPR family. PCMP-H subfamily.

The chain is Putative pentatricopeptide repeat-containing protein At3g15130 (PCMP-H86) from Arabidopsis thaliana (Mouse-ear cress).